The following is a 179-amino-acid chain: Large ribosomal subunit protein uL5 (179 aa).

This sequence belongs to the universal ribosomal protein uL5 family. As to quaternary structure, part of the 50S ribosomal subunit; part of the 5S rRNA/L5/L18/L25 subcomplex. Contacts the 5S rRNA and the P site tRNA. Forms a bridge to the 30S subunit in the 70S ribosome.

Functionally, this is one of the proteins that bind and probably mediate the attachment of the 5S RNA into the large ribosomal subunit, where it forms part of the central protuberance. In the 70S ribosome it contacts protein S13 of the 30S subunit (bridge B1b), connecting the 2 subunits; this bridge is implicated in subunit movement. Contacts the P site tRNA; the 5S rRNA and some of its associated proteins might help stabilize positioning of ribosome-bound tRNAs. This Pseudomonas putida (strain W619) protein is Large ribosomal subunit protein uL5.